A 406-amino-acid chain; its full sequence is Beta-galactoside alpha-2,6-sialyltransferase 1 (406 aa).

Residues 1–9 are Cytoplasmic-facing; that stretch reads MIHTNLKKK. A helical; Signal-anchor for type II membrane protein membrane pass occupies residues 10–26; the sequence is FSCCVLVFLLFAVICVW. Residues 27–406 are Lumenal-facing; sequence KEKKKGSYYD…TLPGFRTIHC (380 aa). Intrachain disulfides connect Cys142/Cys406, Cys184/Cys335, and Cys353/Cys364. 2 N-linked (GlcNAc...) asparagine glycosylation sites follow: Asn149 and Asn161. Substrate contacts are provided by residues Ser189, Asn212, Asn233, 322 to 324, Cys353, Tyr354, Thr365, Tyr369, His370, and Lys376; that span reads SSG. Residue Tyr369 is modified to Phosphotyrosine.

Belongs to the glycosyltransferase 29 family. Monomer and homodimer. N-glycosylated.

The protein localises to the golgi apparatus. It localises to the golgi stack membrane. Its subcellular location is the secreted. It carries out the reaction a beta-D-galactoside + CMP-N-acetyl-beta-neuraminate = an N-acetyl-alpha-neuraminyl-(2-&gt;6)-beta-D-galactosyl derivative + CMP + H(+). It participates in protein modification; protein glycosylation. With respect to regulation, inhibited by CTP. Transfers sialic acid from CMP-sialic acid to galactose-containing acceptor substrates. In B lymphocytes, generates neuraminidase-sensitive lymphocyte cell-surface differentiation antigens, such as CDw75, HB-6 and CD76. This Homo sapiens (Human) protein is Beta-galactoside alpha-2,6-sialyltransferase 1 (ST6GAL1).